A 1755-amino-acid chain; its full sequence is Deleted in lung and esophageal cancer protein 1 (1755 aa).

The span at 1–12 (METRSSKTRRSL) shows a compositional bias: basic residues. 3 disordered regions span residues 1-39 (METR…PSQP), 1339-1360 (PGPS…GSSS), and 1529-1553 (SQDG…EETA). Residues 30–39 (PAGSSSPSQP) show a composition bias toward low complexity.

In terms of assembly, interacts with alpha- and beta-tubulin. Interacts with BBS2, BBS4, BBS5, MKKS, TCP1, CCT2, CCT3, CCT4, CCT5 and CCT7. As to expression, expressed in all tissues examined. Expression is highest in prostate and testis.

The protein resides in the cytoplasm. Functionally, essential for spermatogenesis and male fertility. May play an important role in sperm head and tail formation. May act as a tumor suppressor by inhibiting cell proliferation. In Homo sapiens (Human), this protein is Deleted in lung and esophageal cancer protein 1.